The primary structure comprises 172 residues: uncharacterized protein (172 aa).

The span at 1-28 (MAAAGVTAKAGGGTSAAAASLIRARSPA) shows a compositional bias: low complexity. A disordered region spans residues 1 to 172 (MAAAGVTAKA…GGRRSGRDAG (172 aa)). Positions 58 to 68 (PRRRSRARRGH) are enriched in basic residues. Residues 80-100 (TVGGEGQASQIGGGGGGGGGR) are compositionally biased toward gly residues. The segment covering 129-138 (PGLASSPGVA) has biased composition (low complexity). The segment covering 139–165 (PAGGSGGLWSGAGLCSGLGARGFPGGR) has biased composition (gly residues).

This is an uncharacterized protein from Homo sapiens (Human).